Reading from the N-terminus, the 322-residue chain is Gluconeogenesis factor (322 aa).

NAD(+)-binding positions include T13, 217 to 219 (NVM), 263 to 267 (KYAKE), and 300 to 301 (RH).

It belongs to the gluconeogenesis factor family.

The protein localises to the cytoplasm. Its function is as follows. Required for morphogenesis under gluconeogenic growth conditions. This is Gluconeogenesis factor from Halalkalibacterium halodurans (strain ATCC BAA-125 / DSM 18197 / FERM 7344 / JCM 9153 / C-125) (Bacillus halodurans).